We begin with the raw amino-acid sequence, 559 residues long: (R)-mandelonitrile lyase 1 (559 aa).

The N-terminal stretch at 1–27 (MEKSTMSVILFVLHLLVLHLQYSEVHS) is a signal peptide. Asn30 and Asn44 each carry an N-linked (GlcNAc...) asparagine glycan. FAD-binding positions include 63 to 64 (TS), 82 to 83 (ER), Thr133, and 137 to 140 (NAGV). Asn145, Asn162, Asn178, and Asn218 each carry an N-linked (GlcNAc...) asparagine glycan. Residue Val244 participates in FAD binding. Asn252, Asn255, Asn309, Asn380, Asn402, Asn420, and Asn467 each carry an N-linked (GlcNAc...) asparagine glycan. Cys427 and Cys478 are joined by a disulfide. Substrate is bound at residue Tyr485. 486–487 (WH) contributes to the FAD binding site. Catalysis depends on His487, which acts as the Proton donor. His525 (proton acceptor) is an active-site residue. 526-527 (PQ) provides a ligand contact to FAD.

It belongs to the GMC oxidoreductase family. Monomer. FAD is required as a cofactor.

It catalyses the reaction (R)-mandelonitrile = benzaldehyde + hydrogen cyanide. Involved in cyanogenesis, the release of HCN from injured tissues. Catalyzes the stereospecific addition of HCN to a variety of aldehydes in vitro. It is a major seed constituent, and could have the additional role of a storage form for reduced nitrogen. This is (R)-mandelonitrile lyase 1 (MDL1) from Prunus dulcis (Almond).